A 187-amino-acid chain; its full sequence is Elongation factor P (187 aa).

An N6-(3,6-diaminohexanoyl)-5-hydroxylysine modification is found at Lys33.

This sequence belongs to the elongation factor P family. In terms of processing, may be beta-lysylated on the epsilon-amino group of Lys-33 by the combined action of EpmA and EpmB, and then hydroxylated on the C5 position of the same residue by EpmC (if this protein is present). Lysylation is critical for the stimulatory effect of EF-P on peptide-bond formation. The lysylation moiety may extend toward the peptidyltransferase center and stabilize the terminal 3-CCA end of the tRNA. Hydroxylation of the C5 position on Lys-33 may allow additional potential stabilizing hydrogen-bond interactions with the P-tRNA.

It is found in the cytoplasm. The protein operates within protein biosynthesis; polypeptide chain elongation. In terms of biological role, involved in peptide bond synthesis. Alleviates ribosome stalling that occurs when 3 or more consecutive Pro residues or the sequence PPG is present in a protein, possibly by augmenting the peptidyl transferase activity of the ribosome. Modification of Lys-33 is required for alleviation. This chain is Elongation factor P, found in Blochmanniella floridana.